The following is a 119-amino-acid chain: Flagellar transcriptional regulator FlhD (119 aa).

The protein belongs to the FlhD family. In terms of assembly, homodimer; disulfide-linked. Forms a heterohexamer composed of two FlhC and four FlhD subunits. Each FlhC binds a FlhD dimer, forming a heterotrimer, and a hexamer assembles by dimerization of two heterotrimers.

Its subcellular location is the cytoplasm. In terms of biological role, functions in complex with FlhC as a master transcriptional regulator that regulates transcription of several flagellar and non-flagellar operons by binding to their promoter region. Activates expression of class 2 flagellar genes, including fliA, which is a flagellum-specific sigma factor that turns on the class 3 genes. Also regulates genes whose products function in a variety of physiological pathways. In Shigella dysenteriae serotype 1 (strain Sd197), this protein is Flagellar transcriptional regulator FlhD.